Consider the following 253-residue polypeptide: Ribosomal RNA small subunit methyltransferase G (253 aa).

S-adenosyl-L-methionine contacts are provided by residues Gly-84, Leu-89, 136–137 (IE), and Arg-155.

The protein belongs to the methyltransferase superfamily. RNA methyltransferase RsmG family.

The protein resides in the cytoplasm. Functionally, specifically methylates the N7 position of a guanine in 16S rRNA. This chain is Ribosomal RNA small subunit methyltransferase G, found in Prochlorococcus marinus (strain SARG / CCMP1375 / SS120).